Here is a 93-residue protein sequence, read N- to C-terminus: DNA/RNA-binding protein Alba (93 aa).

The residue at position 11 (Lys11) is an N6-acetyllysine.

The protein belongs to the histone-like Alba family. In terms of processing, acetylated. Acetylation at Lys-11 decreases DNA-binding affinity.

It is found in the cytoplasm. It localises to the chromosome. Functionally, binds double-stranded DNA tightly but without sequence specificity. Involved in DNA compaction. This is DNA/RNA-binding protein Alba from Pyrococcus abyssi (strain GE5 / Orsay).